A 622-amino-acid chain; its full sequence is Arginine--tRNA ligase (622 aa).

Positions 127-137 match the 'HIGH' region motif; the sequence is ANPVHPLHVGH.

The protein belongs to the class-I aminoacyl-tRNA synthetase family.

Its subcellular location is the cytoplasm. The catalysed reaction is tRNA(Arg) + L-arginine + ATP = L-arginyl-tRNA(Arg) + AMP + diphosphate. This is Arginine--tRNA ligase from Ignicoccus hospitalis (strain KIN4/I / DSM 18386 / JCM 14125).